A 1100-amino-acid polypeptide reads, in one-letter code: Conjugal transfer protein TraA (1100 aa).

404-411 lines the ATP pocket; that stretch reads GRAGAGKT.

The protein belongs to the MobA/MobL family.

The sequence is that of Conjugal transfer protein TraA (traA) from Rhizobium radiobacter (Agrobacterium tumefaciens).